Reading from the N-terminus, the 134-residue chain is Histone H3-like centromeric protein A (134 aa).

Over residues 1 to 14 the composition is skewed to basic residues; that stretch reads MGPRRKPQTPRRRP. The tract at residues 1–34 is disordered; it reads MGPRRKPQTPRRRPSSPAPGPSRQSSSVGSQTLR. Glycine 2 carries the n,N,N-trimethylglycine modification. 2 positions are modified to phosphoserine: serine 16 and serine 22. Residues 34–48 form an important for flexibility of DNA ends that protrude from nucleosomes region; that stretch reads RRRQKFMWLKEIKTL. Positions 35–134 are H3-like; the sequence is RRQKFMWLKE…RIRGFEGGLP (100 aa). At serine 62 the chain carries Phosphoserine. Residues 69-110 are CATD; that stretch reads CEKFSRGVDFWWQAQALLALQEAAEAFLIHLFEDAYLLSLHA.

This sequence belongs to the histone H3 family. As to quaternary structure, component of centromeric nucleosomes, where DNA is wrapped around a histone octamer core. The octamer contains two molecules each of H2A, H2B, CENPA and H4 assembled in one CENPA-H4 heterotetramer and two H2A-H2B heterodimers. CENPA modulates the DNA-binding characteristics of nucleosomes so that protruding DNA ends have higher flexibility than in nucleosomes containing conventional histone H3. Inhibits binding of histone H1 to nucleosomes, since histone H1 binds preferentially to rigid DNA linkers that protrude from nucleosomes. Nucleosomes containing CENPA also contain histone H2A variants such as MACROH2A and H2A.Z/H2AZ1. The CENPA-H4 heterotetramer is more compact and structurally more rigid than corresponding H3-H4 heterotetramers. Can assemble into nucleosomes that contain both CENPA and histone H3.3; these nucleosomes interact with a single CENPC chain. Heterotrimer composed of HJURP, CENPA and histone H4, where HJURP interacts with the dimer formed by CENPA and histone H4 and prevents tetramerization of CENPA and H4. Component of the CENPA-NAC complex, at least composed of CENPA, CENPC, CENPH, CENPM, CENPN, CENPT and CENPU. Interacts (via CATD domain) with HJURP; the interaction is direct and is required for its localization to centromeres. Interacts with CENPC, CENPN and CENPT; interaction is direct. Part of a centromere complex consisting of CENPA, CENPT and CENPW. Identified in centromere complexes containing histones H2A, H2B and H4, and at least CENPA, CENPB, CENPC, CENPT, CENPN, HJURP, SUPT16H, SSRP1 and RSF1. Can self-associate. The CENPA-H4 heterotetramer can bind DNA by itself (in vitro). Interacts with CDK1, PPP1CA and RBBP7. In terms of processing, poly-ADP-ribosylated by PARP1. Trimethylated by NTMT1 at the N-terminal glycine after cleavage of Met-1. Methylation is low before incorporation into nucleosomes and increases with cell cycle progression, with the highest levels in mitotic nucleosomes. Post-translationally, phosphorylated by CDK1 at Ser-62 during early mitosis; this abolishes association with chromatin and centromeres, prevents interaction with HJURP and thereby prevents premature assembly of CENPA into centromeres. Dephosphorylated at Ser-62 by PPP1CA during late mitosis.

The protein resides in the nucleus. Its subcellular location is the chromosome. It localises to the centromere. Functionally, histone H3-like nucleosomal protein that is specifically found in centromeric nucleosomes. Replaces conventional H3 in the nucleosome core of centromeric chromatin that serves as an assembly site for the inner kinetochore. The presence of CENPA subtly modifies the nucleosome structure and the way DNA is wrapped around the nucleosome and gives rise to protruding DNA ends that are less well-ordered and rigid compared to nucleosomes containing histone H3. May serve as an epigenetic mark that propagates centromere identity through replication and cell division. Required for recruitment and assembly of kinetochore proteins, and as a consequence required for progress through mitosis, chromosome segregation and cytokinesis. The polypeptide is Histone H3-like centromeric protein A (Cenpa) (Mus musculus (Mouse)).